A 312-amino-acid polypeptide reads, in one-letter code: Methionyl-tRNA formyltransferase (312 aa).

S112–P115 serves as a coordination point for (6S)-5,6,7,8-tetrahydrofolate.

This sequence belongs to the Fmt family.

The catalysed reaction is L-methionyl-tRNA(fMet) + (6R)-10-formyltetrahydrofolate = N-formyl-L-methionyl-tRNA(fMet) + (6S)-5,6,7,8-tetrahydrofolate + H(+). Its function is as follows. Attaches a formyl group to the free amino group of methionyl-tRNA(fMet). The formyl group appears to play a dual role in the initiator identity of N-formylmethionyl-tRNA by promoting its recognition by IF2 and preventing the misappropriation of this tRNA by the elongation apparatus. The protein is Methionyl-tRNA formyltransferase of Syntrophus aciditrophicus (strain SB).